An 88-amino-acid chain; its full sequence is Alpha-latrotoxin associated low molecular weight protein 2 (88 aa).

The signal sequence occupies residues M1–G19. 3 disulfides stabilise this stretch: C30-C66, C46-C62, and C49-C75.

Belongs to the arthropod CHH/MIH/GIH/VIH hormone family. As to expression, expressed by the venom gland.

It is found in the secreted. Functionally, may increase the toxicity of alpha-latrotoxin and/or other venom components. Is non-toxic to mice and to the cockroach Periplaneta americana. The sequence is that of Alpha-latrotoxin associated low molecular weight protein 2 from Latrodectus geometricus (Brown widow spider).